A 152-amino-acid polypeptide reads, in one-letter code: SsrA-binding protein (152 aa).

This sequence belongs to the SmpB family.

Its subcellular location is the cytoplasm. Functionally, required for rescue of stalled ribosomes mediated by trans-translation. Binds to transfer-messenger RNA (tmRNA), required for stable association of tmRNA with ribosomes. tmRNA and SmpB together mimic tRNA shape, replacing the anticodon stem-loop with SmpB. tmRNA is encoded by the ssrA gene; the 2 termini fold to resemble tRNA(Ala) and it encodes a 'tag peptide', a short internal open reading frame. During trans-translation Ala-aminoacylated tmRNA acts like a tRNA, entering the A-site of stalled ribosomes, displacing the stalled mRNA. The ribosome then switches to translate the ORF on the tmRNA; the nascent peptide is terminated with the 'tag peptide' encoded by the tmRNA and targeted for degradation. The ribosome is freed to recommence translation, which seems to be the essential function of trans-translation. In Persephonella marina (strain DSM 14350 / EX-H1), this protein is SsrA-binding protein.